The chain runs to 626 residues: Polygalacturonase 1 beta-like protein 3 (626 aa).

The signal sequence occupies residues 1-23 (MLKQFLLLQSFSFFLFNVVIVGG). The FXXY 1 repeat unit spans residues 117-120 (FSVY). N124 carries an N-linked (GlcNAc...) asparagine glycan. 11 FXXY repeats span residues 125–128 (FTNY), 139–142 (FKNY), 153–156 (FRRY), 167–170 (FTVY), 181–184 (FNSY), 195–198 (FTNY), 209–212 (FTAY), 223–226 (FKTY), 238–241 (FTSY), 252–255 (FTSY), and 266–269 (FSNY). N141 is a glycosylation site (N-linked (GlcNAc...) asparagine). N-linked (GlcNAc...) asparagine glycosylation occurs at N277. FXXY repeat units lie at residues 280–283 (FTSY), 294–297 (FNNY), 308–311 (FANY), 322–325 (FSSY), 336–339 (FVNY), 350–353 (FTGY), and 364–367 (FKTY). N-linked (GlcNAc...) asparagine glycosylation is present at N370. FXXY repeat units lie at residues 373-376 (FKDY) and 383-386 (FAKY). N-linked (GlcNAc...) asparagine glycans are attached at residues N387 and N465. Residues 411–625 (FFRESSLKEG…FENDMNWAIA (215 aa)) form the BURP domain.

In terms of tissue distribution, expressed in flowers and stems. Detected in trichomes, guard cells, root vascular tissue, root hairs, pollen sacs, sepals and styles of pistils.

It is found in the secreted. It localises to the extracellular space. The protein resides in the apoplast. Its subcellular location is the cell wall. In terms of biological role, involved in cell size determination. May serve as a chaperone for expansins through the secretory pathway. In Arabidopsis thaliana (Mouse-ear cress), this protein is Polygalacturonase 1 beta-like protein 3.